The primary structure comprises 155 residues: Putative pre-16S rRNA nuclease (155 aa).

This sequence belongs to the YqgF nuclease family.

The protein localises to the cytoplasm. Functionally, could be a nuclease involved in processing of the 5'-end of pre-16S rRNA. This chain is Putative pre-16S rRNA nuclease, found in Xylella fastidiosa (strain M12).